The sequence spans 111 residues: UPF0235 protein glr3835 (111 aa).

It belongs to the UPF0235 family.

This is UPF0235 protein glr3835 from Gloeobacter violaceus (strain ATCC 29082 / PCC 7421).